The primary structure comprises 206 residues: Hypoxanthine-guanine phosphoribosyltransferase (206 aa).

GMP contacts are provided by residues aspartate 110–threonine 118, lysine 154, and tryptophan 181–glutamate 187. Aspartate 114 (proton acceptor) is an active-site residue.

It belongs to the purine/pyrimidine phosphoribosyltransferase family. In terms of assembly, dimer. Requires Mg(2+) as cofactor.

Its subcellular location is the endoplasmic reticulum. It carries out the reaction IMP + diphosphate = hypoxanthine + 5-phospho-alpha-D-ribose 1-diphosphate. The catalysed reaction is GMP + diphosphate = guanine + 5-phospho-alpha-D-ribose 1-diphosphate. Functionally, converts guanine to guanosine monophosphate, and hypoxanthine to inosine monophosphate. Transfers the 5-phosphoribosyl group from 5-phosphoribosylpyrophosphate onto the purine. Plays a central role in the generation of purine nucleotides through the purine salvage pathway. This is Hypoxanthine-guanine phosphoribosyltransferase (hpt1) from Schizosaccharomyces pombe (strain 972 / ATCC 24843) (Fission yeast).